We begin with the raw amino-acid sequence, 33 residues long: Dermonecrotic toxin LiSicTox-alphaI-1 (33 aa).

Residue glutamate 32 participates in Mg(2+) binding.

The protein belongs to the arthropod phospholipase D family. Class II subfamily. The cofactor is Mg(2+). Contains 2 disulfide bonds. As to expression, expressed by the venom gland.

Its subcellular location is the secreted. It catalyses the reaction an N-(acyl)-sphingosylphosphocholine = an N-(acyl)-sphingosyl-1,3-cyclic phosphate + choline. It carries out the reaction an N-(acyl)-sphingosylphosphoethanolamine = an N-(acyl)-sphingosyl-1,3-cyclic phosphate + ethanolamine. The catalysed reaction is a 1-acyl-sn-glycero-3-phosphocholine = a 1-acyl-sn-glycero-2,3-cyclic phosphate + choline. The enzyme catalyses a 1-acyl-sn-glycero-3-phosphoethanolamine = a 1-acyl-sn-glycero-2,3-cyclic phosphate + ethanolamine. In terms of biological role, dermonecrotic toxins cleave the phosphodiester linkage between the phosphate and headgroup of certain phospholipids (sphingolipid and lysolipid substrates), forming an alcohol (often choline) and a cyclic phosphate. This toxin acts on sphingomyelin (SM). It may also act on ceramide phosphoethanolamine (CPE), lysophosphatidylcholine (LPC) and lysophosphatidylethanolamine (LPE), but not on lysophosphatidylserine (LPS), and lysophosphatidylglycerol (LPG). It acts by transphosphatidylation, releasing exclusively cyclic phosphate products as second products. In vivo, intradermal injection induces dermonecrosis. Induces hemolysis, increased vascular permeability, edema, inflammatory response, and platelet aggregation. In Loxosceles intermedia (Brown spider), this protein is Dermonecrotic toxin LiSicTox-alphaI-1.